The chain runs to 361 residues: G-protein coupled receptor 183 (361 aa).

Over Met-1–Arg-31 the chain is Extracellular. A helical transmembrane segment spans residues Ile-32–Val-57. Topologically, residues Gln-58–Asp-77 are cytoplasmic. A helical membrane pass occupies residues Ile-78–Phe-95. Residue Arg-87 coordinates 7alpha,25-dihydroxycholesterol. The Extracellular segment spans residues Asp-96–Arg-105. Cys-104 and Cys-181 are disulfide-bonded. A helical membrane pass occupies residues Ile-106–Ile-127. Residues Tyr-112 and Tyr-116 each coordinate 7alpha,25-dihydroxycholesterol. The interval Ser-126–Val-134 is interaction with G proteins. The Cytoplasmic portion of the chain corresponds to Asp-128 to Lys-149. Residues Gly-150–Ile-168 traverse the membrane as a helical segment. The Extracellular segment spans residues Asn-169–Ser-192. Residues Leu-193–Cys-215 traverse the membrane as a helical segment. The Cytoplasmic portion of the chain corresponds to Tyr-216 to Lys-241. Residues Ala-242–Ile-265 form a helical membrane-spanning segment. Tyr-260 serves as a coordination point for 7alpha,25-dihydroxycholesterol. The Extracellular segment spans residues Gln-266–Gln-287. A helical membrane pass occupies residues Ile-288–Cys-312. The Cytoplasmic segment spans residues Lys-313 to Lys-361. Ser-328 is subject to Phosphoserine. A disordered region spans residues Glu-340–Lys-361. Over residues Glu-348 to Lys-361 the composition is skewed to polar residues.

Belongs to the G-protein coupled receptor 1 family. As to quaternary structure, homodimer and heterodimer. Heterodimerizes with CXCR5; leading to modulate the interaction between of CXCL13 and CXCR5. As to expression, expressed abundantly in lymphoid tissues such as spleen and lymph node, and in B- and T-lymphocytes. Also highly expressed in lung, heart and gastrointestinal tract, and weakly expressed in the urogenital system and brain. Expressed in astrocytes.

The protein localises to the cell membrane. G-protein coupled receptor expressed in lymphocytes that acts as a chemotactic receptor for B-cells, T-cells, splenic dendritic cells, monocytes/macrophages and astrocytes. Receptor for oxysterol 7-alpha,25-dihydroxycholesterol (7-alpha,25-OHC) and other related oxysterols. Mediates cell positioning and movement of a number of cells by binding the 7-alpha,25-OHC ligand that forms a chemotactic gradient. Binding of 7-alpha,25-OHC mediates the correct localization of B-cells during humoral immune responses. Guides B-cell movement along the B-cell zone-T-cell zone boundary and later to interfollicular and outer follicular regions. Its specific expression during B-cell maturation helps position B-cells appropriately for mounting T-dependent antibody responses. Collaborates with CXCR5 to mediate B-cell migration; probably by forming a heterodimer with CXCR5 that affects the interaction between of CXCL13 and CXCR5. Also acts as a chemotactic receptor for some T-cells upon binding to 7-alpha,25-OHC ligand. Promotes follicular helper T (Tfh) cells differentiation by positioning activated T-cells at the follicle-T-zone interface, promoting contact of newly activated CD4 T-cells with activated dendritic cells and exposing them to Tfh-cell-promoting inducible costimulator (ICOS) ligand. Expression in splenic dendritic cells is required for their homeostasis, localization and ability to induce B- and T-cell responses: GPR183 acts as a chemotactic receptor in dendritic cells that mediates the accumulation of CD4(+) dendritic cells in bridging channels. Regulates migration of astrocytes and is involved in communication between astrocytes and macrophages. Promotes osteoclast precursor migration to bone surfaces. Signals constitutively through G(i)-alpha, but not G(s)-alpha or G(q)-alpha. Signals constitutively also via MAPK1/3 (ERK1/2). The chain is G-protein coupled receptor 183 from Homo sapiens (Human).